The sequence spans 348 residues: Dehydrogenase orsE (348 aa).

Residue 43 to 46 coordinates NADP(+); the sequence is LDTH. 130–137 is a binding site for substrate; that stretch reads FAVEAAVC. NADP(+) contacts are provided by residues 180–183, 203–206, and 272–273; these read SSSV, GAHN, and VH. 292-296 contacts substrate; sequence NDIAT. Residue 339–340 coordinates NADP(+); the sequence is VS.

Belongs to the zinc-containing alcohol dehydrogenase family. Monomer.

Dehydrogenase; part of the gene cluster that mediates the biosynthesis of orsellinic acid, as well as of the cathepsin K inhibitors F9775 A and F9775 B. The non-reducing polyketide synthase orsA produces orsellinic acid by condensing acetyl-CoA with 3 malonyl-CoA units. Further modifications by the decarboxylase orsB and the tyrosinase-like protein orsC lead to the production of F9775 A and F9775 B. The functions of orsD and orsE remain unclear since only orsB and orsC are required to convert orsellinic acid into F9775 A and F9775 B. This chain is Dehydrogenase orsE, found in Emericella nidulans (strain FGSC A4 / ATCC 38163 / CBS 112.46 / NRRL 194 / M139) (Aspergillus nidulans).